The chain runs to 563 residues: Autophagy-related protein 18 (563 aa).

WD repeat units follow at residues 36–74 (KTDD…GKCY), 247–287 (AHKS…KLFQ), and 292–331 (TYST…ALEN). Residues 288 to 292 (FRRGT) carry the L/FRRG motif motif. The interval 329–430 (LENKHKKKKA…SSQAAKNEPL (102 aa)) is disordered. A compositionally biased stretch (acidic residues) spans 366-393 (TQDDDEFADDGDDSDEAVEGDDNDDESL). The span at 404–417 (SQGSSNSFASFNSG) shows a compositional bias: low complexity.

The protein belongs to the WD repeat PROPPIN family. As to quaternary structure, component of the PI(3,5)P2 regulatory complex.

Its subcellular location is the preautophagosomal structure membrane. The protein localises to the vacuole membrane. The protein resides in the endosome membrane. In terms of biological role, the PI(3,5)P2 regulatory complex regulates both the synthesis and turnover of phosphatidylinositol 3,5-bisphosphate (PtdIns(3,5)P2). Necessary for proper vacuole morphology. Plays an important role in osmotically-induced vacuole fragmentation. Required for cytoplasm to vacuole transport (Cvt) vesicle formation, pexophagy and starvation-induced autophagy. Involved in correct ATG9 trafficking to the pre-autophagosomal structure. Might also be involved in premeiotic DNA replication. The chain is Autophagy-related protein 18 (ATG18) from Scheffersomyces stipitis (strain ATCC 58785 / CBS 6054 / NBRC 10063 / NRRL Y-11545) (Yeast).